A 535-amino-acid polypeptide reads, in one-letter code: Alpha-1,3-mannosyl-glycoprotein 4-beta-N-acetylglucosaminyltransferase A (535 aa).

Residues 1-6 (MRLRNG) lie on the Cytoplasmic side of the membrane. A helical; Signal-anchor for type II membrane protein transmembrane segment spans residues 7 to 27 (TVATVLAFITSFLTLSWYTTW). Residues 28–535 (QNGKEKVIAY…NEIHIKKVTN (508 aa)) lie on the Lumenal side of the membrane. Residues 31–57 (KEKVIAYQREFLALKERLRIAEHRISQ) adopt a coiled-coil conformation. N-linked (GlcNAc...) asparagine glycosylation is found at N77 and N458. S474 is subject to Phosphoserine.

This sequence belongs to the glycosyltransferase 54 family. A divalent metal cation serves as cofactor. Post-translationally, N-glycosylated. As to expression, highly expressed in small intestine, kidney, lung and spleen. Weakly expressed in brain, heart and liver.

Its subcellular location is the golgi apparatus membrane. The protein resides in the secreted. It carries out the reaction N(4)-{beta-D-GlcNAc-(1-&gt;2)-alpha-D-Man-(1-&gt;3)-[beta-D-GlcNAc-(1-&gt;2)-alpha-D-Man-(1-&gt;6)]-beta-D-Man-(1-&gt;4)-beta-D-GlcNAc-(1-&gt;4)-beta-D-GlcNAc}-L-asparaginyl-[protein] + UDP-N-acetyl-alpha-D-glucosamine = N(4)-{beta-D-GlcNAc-(1-&gt;2)-[beta-D-GlcNAc-(1-&gt;4)]-alpha-D-Man-(1-&gt;3)-[beta-D-GlcNAc-(1-&gt;2)-alpha-D-Man-(1-&gt;6)]-beta-D-Man-(1-&gt;4)-beta-D-GlcNAc-(1-&gt;4)-beta-D-GlcNAc}-L-asparaginyl-[protein] + UDP + H(+). The enzyme catalyses an N(4)-{beta-D-GlcNAc-(1-&gt;2)-alpha-D-Man-(1-&gt;3)-[alpha-D-Man-(1-&gt;6)]-beta-D-Man-(1-&gt;4)-beta-D-GlcNAc-(1-&gt;4)-beta-D-GlcNAc}-L-asparaginyl-[protein] + UDP-N-acetyl-alpha-D-glucosamine = an N(4)-{beta-D-GlcNAc-(1-&gt;2)-[beta-D-GlcNAc-(1-&gt;4)]-alpha-D-Man-(1-&gt;3)-[alpha-D-Man-(1-&gt;6)]-beta-D-Man-(1-&gt;4)-beta-D-GlcNAc-(1-&gt;4)-beta-D-GlcNAc}-L-asparaginyl-[protein] + UDP + H(+). It catalyses the reaction an N(4)-{beta-D-GlcNAc-(1-&gt;2)-alpha-D-Man-(1-&gt;3)-[beta-D-GlcNAc-(1-&gt;2)-[beta-D-GlcNAc-(1-&gt;6)]-alpha-D-Man-(1-&gt;6)]-beta-D-Man-(1-&gt;4)-beta-D-GlcNAc-(1-&gt;4)-beta-D-GlcNAc}-L-asparaginyl-[protein] + UDP-N-acetyl-alpha-D-glucosamine = an N(4)-{beta-D-GlcNAc-(1-&gt;2)-[beta-D-GlcNAc-(1-&gt;4)]-alpha-D-Man-(1-&gt;3)-[beta-D-GlcNAc-(1-&gt;2)-[beta-D-GlcNAc-(1-&gt;6)]-alpha-D-Man-(1-&gt;6)]-beta-D-Man-(1-&gt;4)-beta-D-GlcNAc-(1-&gt;4)-beta-D-GlcNAc}-L-asparaginyl-[protein] + UDP + H(+). The catalysed reaction is an N(4)-{beta-D-GlcNAc-(1-&gt;2)-alpha-D-Man-(1-&gt;3)-[beta-D-GlcNAc-(1-&gt;2)-alpha-D-Man-(1-&gt;6)]-beta-D-Man-(1-&gt;4)-beta-D-GlcNAc-(1-&gt;4)-[alpha-L-Fuc-(1-&gt;6)]-beta-D-GlcNAc}-L-asparaginyl-[protein] + UDP-N-acetyl-alpha-D-glucosamine = N(4)-{beta-D-GlcNAc-(1-&gt;2)-[beta-D-GlcNAc-(1-&gt;4)]-alpha-D-Man-(1-&gt;3)-[beta-D-GlcNAc-(1-&gt;2)-alpha-D-Man-(1-&gt;6)]-beta-D-Man-(1-&gt;4)-beta-D-GlcNAc-(1-&gt;4)-[alpha-L-Fuc-(1-&gt;6)]-beta-D-GlcNAc}-asparaginyl-[protein] + UDP + H(+). It carries out the reaction an N(4)-{beta-D-GlcNAc-(1-&gt;2)-alpha-D-Man-(1-&gt;3)-[beta-D-Gal-(1-&gt;4)-beta-D-GlcNAc-(1-&gt;2)-alpha-D-Man-(1-&gt;6)]-beta-D-Man-(1-&gt;4)-beta-D-GlcNAc-(1-&gt;4)-beta-D-GlcNAc}-L-asparaginyl-[protein] + UDP-N-acetyl-alpha-D-glucosamine = an N(4)-{beta-D-GlcNAc-(1-&gt;2)-[beta-D-GlcNAc-(1-&gt;4)]-alpha-D-Man-(1-&gt;3)-[beta-D-Gal-(1-&gt;4)-beta-D-GlcNAc-(1-&gt;2)-alpha-D-Man-(1-&gt;6)]-beta-D-Man-(1-&gt;4)-beta-D-GlcNAc-(1-&gt;4)-beta-D-GlcNAc}-L-asparaginyl-[protein] + UDP + H(+). The enzyme catalyses N(4)-{beta-D-GlcNAc-(1-&gt;2)-alpha-D-Man-(1-&gt;3)-[alpha-D-Man-(1-&gt;3)-{alpha-D-Man-(1-&gt;6)}-alpha-D-Man-(1-&gt;6)]-beta-D-Man-(1-&gt;4)-beta-D-GlcNAc-(1-&gt;4)-beta-D-GlcNAc}-asparaginyl-[protein] + UDP-N-acetyl-alpha-D-glucosamine = N(4)-{beta-D-GlcNAc-(1-&gt;2)-[beta-D-GlcNAc-(1-&gt;4)]-alpha-D-Man-(1-&gt;3)-[alpha-D-Man-(1-&gt;3)-{alpha-D-Man-(1-&gt;6)}-alpha-D-Man-(1-&gt;6)]-beta-D-Man-(1-&gt;4)-beta-D-GlcNAc-(1-&gt;4)-beta-D-GlcNAc}-asparaginyl-[protein] + UDP + H(+). It catalyses the reaction N(4)-{beta-D-GlcNAc-(1-&gt;2)-alpha-D-Man-(1-&gt;3)-beta-D-Man-(1-&gt;4)-beta-D-GlcNAc-(1-&gt;4)-beta-D-GlcNAc}-asparaginyl-[protein] + UDP-N-acetyl-alpha-D-glucosamine = N(4)-{beta-D-GlcNAc-(1-&gt;2)-[beta-D-GlcNAc-(1-&gt;4)]-alpha-D-Man-(1-&gt;3)-beta-D-Man-(1-&gt;4)-beta-D-GlcNAc-(1-&gt;4)-beta-D-GlcNAc}-asparaginyl-[protein] + UDP + H(+). It participates in protein modification; protein glycosylation. Inhibited by UDP. Glycosyltransferase that catalyze the transfer of GlcNAc from UDP-GlcNAc to the GlcNAcbeta1-2Manalpha1-3 arm of the core structure of N-linked glycans through a beta1-4 linkage and participates in the production of tri- and tetra-antennary N-linked sugar chains. Involved in glucose transport by mediating SLC2A2/GLUT2 glycosylation, thereby controlling cell-surface expression of SLC2A2 in pancreatic beta cells. This chain is Alpha-1,3-mannosyl-glycoprotein 4-beta-N-acetylglucosaminyltransferase A, found in Bos taurus (Bovine).